The primary structure comprises 569 residues: Intraflagellar transport protein 74/72 (569 aa).

Coiled-coil stretches lie at residues 75–156, 201–231, and 271–298; these read ITAT…TRNE, YRSL…VAAN, and AITL…AESH.

The protein belongs to the IFT74 family.

The protein resides in the cell projection. It localises to the cilium. The protein localises to the flagellum. Its subcellular location is the cytoplasm. It is found in the cytoskeleton. The protein resides in the flagellum axoneme. It localises to the flagellum basal body. In terms of biological role, component of the intraflagellar transport complex B (IFT-B) involved in flagellar assembly. The polypeptide is Intraflagellar transport protein 74/72 (Giardia intestinalis (strain ATCC 50803 / WB clone C6) (Giardia lamblia)).